We begin with the raw amino-acid sequence, 490 residues long: Probable glycine dehydrogenase (decarboxylating) subunit 2 (490 aa).

Lys-273 bears the N6-(pyridoxal phosphate)lysine mark.

This sequence belongs to the GcvP family. C-terminal subunit subfamily. The glycine cleavage system is composed of four proteins: P, T, L and H. In this organism, the P 'protein' is a heterodimer of two subunits. Requires pyridoxal 5'-phosphate as cofactor.

The enzyme catalyses N(6)-[(R)-lipoyl]-L-lysyl-[glycine-cleavage complex H protein] + glycine + H(+) = N(6)-[(R)-S(8)-aminomethyldihydrolipoyl]-L-lysyl-[glycine-cleavage complex H protein] + CO2. The glycine cleavage system catalyzes the degradation of glycine. The P protein binds the alpha-amino group of glycine through its pyridoxal phosphate cofactor; CO(2) is released and the remaining methylamine moiety is then transferred to the lipoamide cofactor of the H protein. This is Probable glycine dehydrogenase (decarboxylating) subunit 2 from Staphylococcus aureus (strain MRSA252).